Consider the following 723-residue polypeptide: Homeobox protein HAT3.1 (723 aa).

A compositionally biased stretch (basic residues) spans 1–10; sequence MYKAVSKRVT. 2 disordered regions span residues 1-94 and 135-173; these read MYKA…GSHR and KRAQ…QVRE. A compositionally biased stretch (polar residues) spans 11 to 23; the sequence is RSSGSGLKQTNVD. Basic and acidic residues predominate over residues 58-83; that stretch reads LHHEIMDHGKGNEEQKPTPQTVKKDS. Residues 265–322 form a PHD-type zinc finger; it reads DIFCAKCGSKDLSVDNDIILCDGFCDRGFHQYCLEPPLRKEDIPPDDEGWLCPGCDCK. 2 disordered regions span residues 357–628 and 680–723; these read GGQN…KTQR and VEKL…RRRK. The segment covering 365–407 has biased composition (acidic residues); sequence LPSDDSDDEEYDPDCLNDNENDEDGSDDNEESENEDGSSDETE. Residues 417-427 show a composition bias toward basic and acidic residues; it reads ESFKEGKDIMK. Acidic residues predominate over residues 435–453; sequence DDSEDDDYDPDAPTCDDDK. Basic and acidic residues-rich tracts occupy residues 518-530 and 547-556; these read RNVE…KLYD and DKTARMGKED. A compositionally biased stretch (basic residues) spans 580–589; the sequence is KKLIRKSKRA. A DNA-binding region (homeobox) is located at residues 614–673; it reads SSSSACKQTDPKTQRLYISFQENQYPDKATKESLAKELQMTVKQVNNWFKHRRWSINSKP. The segment covering 680–690 has biased composition (basic and acidic residues); it reads VEKLKTGKEGE. Positions 695–705 are enriched in polar residues; that stretch reads VAGSSKQTMET.

It belongs to the PHD-associated homeobox family. In terms of tissue distribution, primarily detected in root tissue.

It is found in the nucleus. Functionally, binds only to large DNA fragments. Recognizes a DNA fragment carrying 8 copies of box7 motif of the light-induced cab-E promoter of Nicotiana plumbaginifolia. Also recognizes the box7m1 motif. This is Homeobox protein HAT3.1 (HAT3.1) from Arabidopsis thaliana (Mouse-ear cress).